The primary structure comprises 258 residues: Large ribosomal subunit protein bL28m (258 aa).

The transit peptide at 1–21 (MQKIFRPFQLTRGFTSSVKNF) directs the protein to the mitochondrion.

It belongs to the bacterial ribosomal protein bL28 family. Component of the mitochondrial large ribosomal subunit (mt-LSU). Mature yeast 74S mitochondrial ribosomes consist of a small (37S) and a large (54S) subunit. The 37S small subunit contains a 15S ribosomal RNA (15S mt-rRNA) and 34 different proteins. The 54S large subunit contains a 21S rRNA (21S mt-rRNA) and 46 different proteins.

Its subcellular location is the mitochondrion. In terms of biological role, component of the mitochondrial ribosome (mitoribosome), a dedicated translation machinery responsible for the synthesis of mitochondrial genome-encoded proteins, including at least some of the essential transmembrane subunits of the mitochondrial respiratory chain. The mitoribosomes are attached to the mitochondrial inner membrane and translation products are cotranslationally integrated into the membrane. The chain is Large ribosomal subunit protein bL28m (MRPL24) from Saccharomyces cerevisiae (strain ATCC 204508 / S288c) (Baker's yeast).